Reading from the N-terminus, the 378-residue chain is UPF0754 membrane protein SH1116 (378 aa).

2 consecutive transmembrane segments (helical) span residues phenylalanine 4–isoleucine 24 and serine 358–valine 378.

This sequence belongs to the UPF0754 family.

It localises to the cell membrane. The chain is UPF0754 membrane protein SH1116 from Staphylococcus haemolyticus (strain JCSC1435).